A 197-amino-acid chain; its full sequence is Xanthine phosphoribosyltransferase (197 aa).

Xanthine-binding residues include Leu20 and Asn27. 5-phospho-alpha-D-ribose 1-diphosphate is bound at residue 128–132 (ANGQA). Lys156 provides a ligand contact to xanthine.

Belongs to the purine/pyrimidine phosphoribosyltransferase family. Xpt subfamily. In terms of assembly, homodimer.

It localises to the cytoplasm. The enzyme catalyses XMP + diphosphate = xanthine + 5-phospho-alpha-D-ribose 1-diphosphate. Its pathway is purine metabolism; XMP biosynthesis via salvage pathway; XMP from xanthine: step 1/1. Its function is as follows. Converts the preformed base xanthine, a product of nucleic acid breakdown, to xanthosine 5'-monophosphate (XMP), so it can be reused for RNA or DNA synthesis. The chain is Xanthine phosphoribosyltransferase from Bacillus cereus (strain G9842).